A 26-amino-acid polypeptide reads, in one-letter code: Protein YsdD (26 aa).

The interval 1-26 (MTIDKNWLNRSNKDPGRSLRFTHQPV) is disordered.

This is Protein YsdD from Escherichia coli (strain K12).